An 85-amino-acid polypeptide reads, in one-letter code: Large ribosomal subunit protein bL27 (85 aa).

The disordered stretch occupies residues 1-22 (MAHKKAGGSTRNGRDSESKRLG).

The protein belongs to the bacterial ribosomal protein bL27 family.

The chain is Large ribosomal subunit protein bL27 from Vibrio vulnificus (strain CMCP6).